We begin with the raw amino-acid sequence, 92 residues long: MNRLQQRQLFLENLLVGVNSTFHQMQKHSINTCCRSLQRILDHLILLQTIHSPVFRLDRMQLRQMQTLACLWIHQHNHDLQVMSDAIKWISP.

The protein belongs to the rotavirus A NSP6 family. Interacts with NSP2 and NSP5.

It localises to the host cytoplasm. Its subcellular location is the host mitochondrion. This Rotavirus A (strain RVA/SA11-Both/G3P5B[2]) (RV-A) protein is Non-structural protein 6.